We begin with the raw amino-acid sequence, 285 residues long: Vacuolar protein sorting-associated protein 37B (285 aa).

The interaction with IST1 stretch occupies residues 50–170 (ASNRSLAEGN…EMVLKGQRLP (121 aa)). One can recognise a VPS37 C-terminal domain in the interval 84–173 (FEAYQIKKTK…LKGQRLPQAL (90 aa)). A disordered region spans residues 175–201 (PLPPRLPELAPTAPLPYPAPEASGPPA). Position 218 is an omega-N-methylarginine (R218). A disordered region spans residues 230-285 (GQAVPYPGLQCPPLPPRVGLPTQQGFSSQFVSPYPPPLPQRPPPRLPPHQPGFILQ). A compositionally biased stretch (polar residues) spans 250-260 (PTQQGFSSQFV). Residues 262–279 (PYPPPLPQRPPPRLPPHQ) are compositionally biased toward pro residues.

The protein belongs to the VPS37 family. Component of the ESCRT-I complex (endosomal sorting complex required for transport I) which consists of TSG101, VPS28, a VPS37 protein (VPS37A to -D) and MVB12A or MVB12B in a 1:1:1:1 stoichiometry. Interacts with TSG101, VPS28, MVB12A and MVB12B. Component of the ESCRT-I complex (endosomal sorting complex required for transport I) which consists of TSG101, VPS28, a VPS37 protein (VPS37A to -D) and UBAP1 in a 1:1:1:1 stoichiometry. Interacts with CEP55. Interacts with IST1. As to expression, widely expressed. Expressed in macrophages and lymphocytes.

It localises to the late endosome membrane. In terms of biological role, component of the ESCRT-I complex, a regulator of vesicular trafficking process. Required for the sorting of endocytic ubiquitinated cargos into multivesicular bodies. May be involved in cell growth and differentiation. The protein is Vacuolar protein sorting-associated protein 37B (VPS37B) of Homo sapiens (Human).